We begin with the raw amino-acid sequence, 117 residues long: Ig heavy chain V region 1-62-3 (117 aa).

The first 19 residues, 1 to 19 (MGWSCIMLFLAATATGVHF), serve as a signal peptide directing secretion. Residues 20–49 (QVQLQQPGAELVKPGASVKLSSKASGYTFT) form a framework-1 region. Residues 50–54 (SYWMH) form a complementarity-determining-1 region. Positions 55-68 (WVKQRPGRGLEWIG) are framework-2. A complementarity-determining-2 region spans residues 69 to 85 (RIDPNSGGTKYNEKFKS). A framework-3 region spans residues 86–117 (KATLTVDKPSSTAYMQLSSLTSEDSAVYYCAR).

This Mus musculus (Mouse) protein is Ig heavy chain V region 1-62-3 (Ighv1-62-3).